Here is a 248-residue protein sequence, read N- to C-terminus: Probable transcriptional regulatory protein R02753 (248 aa).

It belongs to the TACO1 family.

It is found in the cytoplasm. The chain is Probable transcriptional regulatory protein R02753 from Rhizobium meliloti (strain 1021) (Ensifer meliloti).